The sequence spans 912 residues: Phosphoenolpyruvate carboxylase (912 aa).

Active-site residues include H138 and K575.

Belongs to the PEPCase type 1 family. Mg(2+) is required as a cofactor.

The catalysed reaction is oxaloacetate + phosphate = phosphoenolpyruvate + hydrogencarbonate. In terms of biological role, forms oxaloacetate, a four-carbon dicarboxylic acid source for the tricarboxylic acid cycle. The protein is Phosphoenolpyruvate carboxylase of Lactobacillus acidophilus (strain ATCC 700396 / NCK56 / N2 / NCFM).